A 146-amino-acid polypeptide reads, in one-letter code: Large ribosomal subunit protein uL15 (146 aa).

The span at 1–13 (MKLNELHPSEGSR) shows a compositional bias: basic and acidic residues. Residues 1 to 56 (MKLNELHPSEGSRHARKRVGRGTSSGFGKTSGRGQKGQHARSGGNTRLGFEGGQMP) form a disordered region. The segment covering 23 to 35 (TSSGFGKTSGRGQ) has biased composition (gly residues).

It belongs to the universal ribosomal protein uL15 family. In terms of assembly, part of the 50S ribosomal subunit.

In terms of biological role, binds to the 23S rRNA. This is Large ribosomal subunit protein uL15 from Lactobacillus delbrueckii subsp. bulgaricus (strain ATCC 11842 / DSM 20081 / BCRC 10696 / JCM 1002 / NBRC 13953 / NCIMB 11778 / NCTC 12712 / WDCM 00102 / Lb 14).